Consider the following 279-residue polypeptide: Putative colanic acid biosynthesis glycosyl transferase WcaA (279 aa).

To R.meliloti ExoO.

The protein operates within slime biogenesis; slime polysaccharide biosynthesis. The sequence is that of Putative colanic acid biosynthesis glycosyl transferase WcaA (wcaA) from Escherichia coli (strain K12).